Reading from the N-terminus, the 593-residue chain is Proteasome-associated ATPase (593 aa).

Residues 5 to 94 (DDADSRAARW…KEEIDRLAQP (90 aa)) adopt a coiled-coil conformation. 281–286 (GCGKTL) contacts ATP. Residues 574–593 (GKGADAGRSIETASNTGQYL) form a disordered region. The span at 584–593 (ETASNTGQYL) shows a compositional bias: polar residues. The tract at residues 592 to 593 (YL) is docks into pockets in the proteasome alpha-ring.

The protein belongs to the AAA ATPase family. Homohexamer. Assembles into a hexameric ring structure that caps the 20S proteasome core. Strongly interacts with the prokaryotic ubiquitin-like protein Pup through a hydrophobic interface; the interacting region of ARC lies in its N-terminal coiled-coil domain. There is one Pup binding site per ARC hexamer ring. Upon ATP-binding, the C-terminus of ARC interacts with the alpha-rings of the proteasome core, possibly by binding to the intersubunit pockets.

The protein operates within protein degradation; proteasomal Pup-dependent pathway. Functionally, ATPase which is responsible for recognizing, binding, unfolding and translocation of pupylated proteins into the bacterial 20S proteasome core particle. May be essential for opening the gate of the 20S proteasome via an interaction with its C-terminus, thereby allowing substrate entry and access to the site of proteolysis. Thus, the C-termini of the proteasomal ATPase may function like a 'key in a lock' to induce gate opening and therefore regulate proteolysis. In Salinispora arenicola (strain CNS-205), this protein is Proteasome-associated ATPase.